The primary structure comprises 1252 residues: ABC transporter B family member 19 (1252 aa).

The N-linked (GlcNAc...) asparagine glycan is linked to asparagine 5. The 290-residue stretch at 41-330 folds into the ABC transmembrane type-1 1 domain; that stretch reads MFVGSLGAIV…SFSNLGAFSK (290 aa). Transmembrane regions (helical) follow at residues 42 to 62 and 88 to 108; these read FVGSLGAIVHGSSMPVFFLLF and LYFVYLGLVVCFSSYAEIACW. An ATP-binding site is contributed by aspartate 136. 4 helical membrane passes run 163 to 183, 187 to 207, 274 to 294, and 308 to 328; these read VGNFIHYLSTFLAGLVVGFVS, LALLSVAVIPGIAFAGGLYAY, CTYGIACMSWALVFWYAGVFI, and IFSAIVGGMSLGQSFSNLGAF. Brassinolide is bound by residues tyrosine 276 and tryptophan 283. Positions 365-601 constitute an ABC transporter 1 domain; the sequence is IEFKDVTFSY…SGAYASLIRF (237 aa). ATP is bound by residues tyrosine 374, serine 376, glycine 405, lysine 406, serine 407, threonine 408, and glutamate 529. Asparagine 641 is a glycosylation site (N-linked (GlcNAc...) asparagine). One can recognise an ABC transmembrane type-1 2 domain in the interval 687 to 975; the sequence is SIMGAVGSIL…TVSLAPEIIR (289 aa). 2 helical membrane-spanning segments follow: residues 688–708 and 732–752; these read IMGAVGSILSGFIGPTFAIVM and FIYIGAGLYAVGAYLIQHYFF. Asparagine 758 is a glycosylation site (N-linked (GlcNAc...) asparagine). Residue aspartate 780 coordinates ATP. Asparagine 785 and asparagine 814 each carry an N-linked (GlcNAc...) asparagine glycan. Helical transmembrane passes span 822–842, 914–934, and 949–969; these read FIVAFIVEWRVSLLILGTFPL, GFLFGLSQLALYGSEALILWY, and VIKVFVVLVITANSVAETVSL. Residues 965–1252 form an interaction with FKBP42/TWD1 region; the sequence is ETVSLAPEII…RLLQLQTHRI (288 aa). One can recognise an ABC transporter 2 domain in the interval 1010–1246; it reads IEFRHVDFAY…PEGAYSRLLQ (237 aa). The ATP site is built by tyrosine 1019, serine 1021, arginine 1022, lysine 1051, serine 1052, and serine 1053.

It belongs to the ABC transporter superfamily. ABCB family. Multidrug resistance exporter (TC 3.A.1.201) subfamily. Interacts with 1-naphthylphthalamic acid (NPA), and FKBP42/TWD1. Post-translationally, phosphorylated by PHOT1 in phototropic seedlings, to modulates auxin export and distribution and regulates leaf and petiole curling. Ubiquitous, mostly in shoot meristems. Present in the majority of stem cells, predominantly in a non-polar manner. Accumulates in seedlings roots and hypocotyls, and in roots apices and inflorescences.

Its subcellular location is the cell membrane. The catalysed reaction is (indol-3-yl)acetate(in) + ATP + H2O = (indol-3-yl)acetate(out) + ADP + phosphate + H(+). It catalyses the reaction brassinolide(in) + ATP + H2O = brassinolide(out) + ADP + phosphate + H(+). The enzyme catalyses 24-epi-brassinolide(in) + ATP + H2O = 24-epi-brassinolide(out) + ADP + phosphate + H(+). It carries out the reaction 24-epi-castasterone(in) + ATP + H2O = 24-epi-castasterone(out) + ADP + phosphate + H(+). The catalysed reaction is castasterone(in) + ATP + H2O = castasterone(out) + ADP + phosphate + H(+). With respect to regulation, transport capacity is stimulated by the chaperone protein FKBP42/TWD1. ATPase activity is specifically activated by bioactive brassinosteroids in a dose-dependent manner, including brassinolide (BL), 24-epiBL and 24-epicastasterone (24-epiCS). Inhibited by vanadate. In terms of biological role, brassinosteroid exporter that, in conjunction with ABCB1, supports the accumulation of exogenous brassinosteroids (BR) in the apoplast, thus promoting BR signaling initiation involving the specific receptor BRI1 and required for plant growth and stress responses. Mediates the transport of castasterone (CSA) and brassinolide (BL) across the plasma membrane. Auxin efflux transporter that acts as a negative regulator of light signaling to promote hypocotyl elongation by mediating leaf tip to petiole auxin flux. Required for the regulation of leaf position and morphology during PHOT1-mediated blue light responses involving auxin distribution, especially in low light fluence. Together with ABCB1 and in a FKBP42/TWD1-dependent manner, supports seed development by promoting stamen elongation and, to a lesser extent, anther dehiscence and pollen maturation, probably as auxin transporters. Contributes to the connective auxin transport (CAT) that ensures communication across the shoot system, including auxin loading at axillary bud apices to influence strigolactone-mediated bud outgrowth responses and shoot branching control. Mediates the accumulation of chlorophyll and anthocyanin, as well as the expression of genes in response to light. Participates in auxin efflux and thus regulates the polar auxin basipetal transport (from auxin-producing leaves to auxin-sensitive tissues, and from root tips to root elongating zone). Involved in diverse auxin-mediated responses including gravitropism, phototropism and lateral root formation. Required for the regulation of organ bending, such as gravitropic root bending. The sequence is that of ABC transporter B family member 19 from Arabidopsis thaliana (Mouse-ear cress).